We begin with the raw amino-acid sequence, 108 residues long: UPF0145 protein Tery_3795 (108 aa).

This sequence belongs to the UPF0145 family.

The sequence is that of UPF0145 protein Tery_3795 from Trichodesmium erythraeum (strain IMS101).